Here is a 540-residue protein sequence, read N- to C-terminus: GMP synthase [glutamine-hydrolyzing] (540 aa).

The region spanning 24-217 is the Glutamine amidotransferase type-1 domain; it reads KILIVDFGSQ…VRKVAGLTGD (194 aa). Cys101 functions as the Nucleophile in the catalytic mechanism. Active-site residues include His191 and Glu193. In terms of domain architecture, GMPS ATP-PPase spans 218–415; it reads WTMRAFREEA…LGLPEIFVGR (198 aa). Residue 245–251 coordinates ATP; the sequence is SGGVDSS.

As to quaternary structure, homodimer.

It carries out the reaction XMP + L-glutamine + ATP + H2O = GMP + L-glutamate + AMP + diphosphate + 2 H(+). It functions in the pathway purine metabolism; GMP biosynthesis; GMP from XMP (L-Gln route): step 1/1. Its function is as follows. Catalyzes the synthesis of GMP from XMP. The protein is GMP synthase [glutamine-hydrolyzing] of Nitrobacter hamburgensis (strain DSM 10229 / NCIMB 13809 / X14).